A 504-amino-acid polypeptide reads, in one-letter code: MSFSVDVLANIAIELQRGIGHQDRFQRLITTLRQVLECDASALLRYDLRQFIPLAIDGLAKDVLGRRFALEGHPRLEAIARAGDVVRFPADSGLPDPYDGLIPGQESLKVHACVGLPLFAGQNLIGALTLDGMQPDQFDVFSDEELRLIAALAAGALSNALLIEQLESQNMLPGDAAPFEAVKQTQMIGLSPGMTQLKKEIEIVAASDLNVLISGETGTGKELVAKAIHEASPRAVNPLVYLNCAALPESVAESELFGHVKGAFTGAISNRSGKFEMADNGTLFLDEIGELSLALQAKLLRVLQYGDIQRVGDDRSLRVDVRVLAATNRDLREEVLAGRFRADLFHRLSVFPLSVPPLRERGDDVILLAGYFCEQCRLRQGLSRVVLSAGARNLLQHYSFPGNVRELEHAIHRAVVLARATRNGDEVILEAQHFAFPEVTLPPPEAAAVPVVKQNLREATEAFQRETIRQALAQNHHNWAACARMLETDVANLHRLAKRLGLKD.

Aspartate 57 carries the post-translational modification 4-aspartylphosphate. The Sigma-54 factor interaction domain maps to 187 to 416 (MIGLSPGMTQ…LEHAIHRAVV (230 aa)). Residues 215–222 (GETGTGKE) and 278–287 (ADNGTLFLDE) each bind ATP. Positions 479–498 (WAACARMLETDVANLHRLAK) form a DNA-binding region, H-T-H motif.

Its pathway is nitrogen metabolism; nitric oxide reduction. Required for the expression of anaerobic nitric oxide (NO) reductase, acts as a transcriptional activator for at least the norVW operon. Activation also requires sigma-54. The protein is Anaerobic nitric oxide reductase transcription regulator NorR of Shigella dysenteriae serotype 1 (strain Sd197).